A 208-amino-acid polypeptide reads, in one-letter code: Small ribosomal subunit protein uS4 (208 aa).

Positions 96 to 159 (SRLDNIVYRL…KKNEKVLEAL (64 aa)) constitute an S4 RNA-binding domain.

This sequence belongs to the universal ribosomal protein uS4 family. Part of the 30S ribosomal subunit. Contacts protein S5. The interaction surface between S4 and S5 is involved in control of translational fidelity.

Functionally, one of the primary rRNA binding proteins, it binds directly to 16S rRNA where it nucleates assembly of the body of the 30S subunit. With S5 and S12 plays an important role in translational accuracy. The protein is Small ribosomal subunit protein uS4 of Mycoplasma capricolum subsp. capricolum (strain California kid / ATCC 27343 / NCTC 10154).